Reading from the N-terminus, the 411-residue chain is Multidrug resistance protein MdtG (411 aa).

Transmembrane regions (helical) follow at residues 17-37 (LFVA…VMPF), 59-79 (LVFS…GGLA), 92-112 (ALGM…WQFL), 116-136 (AVLG…ATQV), 147-167 (WLST…GLLA), 174-194 (PVFF…LFAV), 222-242 (VLTL…IAPI), 257-277 (LAFV…ISAP), 291-311 (ILVA…MVQN), 320-340 (FLLG…LIYN), and 379-399 (AVFV…WITL).

The protein belongs to the major facilitator superfamily. DHA1 family. MdtG (TC 2.A.1.2.20) subfamily.

The protein resides in the cell inner membrane. This is Multidrug resistance protein MdtG from Erwinia billingiae (strain Eb661).